A 101-amino-acid polypeptide reads, in one-letter code: Small ribosomal subunit protein uS14 (101 aa).

Belongs to the universal ribosomal protein uS14 family. As to quaternary structure, part of the 30S ribosomal subunit. Contacts proteins S3 and S10.

Binds 16S rRNA, required for the assembly of 30S particles and may also be responsible for determining the conformation of the 16S rRNA at the A site. This chain is Small ribosomal subunit protein uS14, found in Aliivibrio salmonicida (strain LFI1238) (Vibrio salmonicida (strain LFI1238)).